Here is a 631-residue protein sequence, read N- to C-terminus: Quinoprotein alcohol dehydrogenase PedE (631 aa).

Positions 1-33 (MTIRSLPALSPLALSVRVLLMAGSLALGNVATA) are cleaved as a signal peptide. Positions 53, 56, and 59 each coordinate Ca(2+). Glu103 contributes to the pyrroloquinoline quinone binding site. Residues Cys147 and Cys148 are joined by a disulfide bond. Residues Arg153, Thr197, and 215 to 217 (HGS) contribute to the pyrroloquinoline quinone site. Residue Glu221 coordinates Ca(2+). Positions 250 to 286 (GRLNGKDSTPTGDVKAPSWPDDPTTETGKVEAWSHGG) are disordered. Asn308 and Asp358 together coordinate Ca(2+). The Proton acceptor role is filled by Asp358. A pyrroloquinoline quinone-binding site is contributed by Arg386. Residues 421 to 443 (GRPVENPGQRPAKPLPGETKGKP) form a disordered region. Residues Trp531 and Ala595 each contribute to the pyrroloquinoline quinone site.

This sequence belongs to the bacterial PQQ dehydrogenase family. As to quaternary structure, homodimer. Interacts with cytochrome c550. Requires pyrroloquinoline quinone as cofactor. The cofactor is Ca(2+). Post-translationally, the disulfide ring formed between the two adjacent cysteine residues Cys-147 and Cys-148 is essential for efficient electron transfer at pH 7 from PedE to its natural electron acceptor cytochrome c550.

The protein localises to the periplasm. The enzyme catalyses a primary alcohol + 2 Fe(III)-[cytochrome c] = an aldehyde + 2 Fe(II)-[cytochrome c] + 2 H(+). It carries out the reaction ethanol + 2 Fe(III)-[cytochrome c] = acetaldehyde + 2 Fe(II)-[cytochrome c] + 2 H(+). The catalysed reaction is butan-1-ol + 2 Fe(III)-[cytochrome c] = butanal + 2 Fe(II)-[cytochrome c] + 2 H(+). It catalyses the reaction butan-2-ol + 2 Fe(III)-[cytochrome c] = butan-2-one + 2 Fe(II)-[cytochrome c] + 2 H(+). The enzyme catalyses 2-phenylethanol + 2 Fe(III)-[cytochrome c] = 2-phenylacetaldehyde + 2 Fe(II)-[cytochrome c] + 2 H(+). It carries out the reaction octan-1-ol + 2 Fe(III)-[cytochrome c] = octanal + 2 Fe(II)-[cytochrome c] + 2 H(+). The catalysed reaction is hexan-1-ol + 2 Fe(III)-[cytochrome c] = hexanal + 2 Fe(II)-[cytochrome c] + 2 H(+). It catalyses the reaction cinnamyl alcohol + 2 Fe(III)-[cytochrome c] = cinnamaldehyde + 2 Fe(II)-[cytochrome c] + 2 H(+). The enzyme catalyses farnesol + 2 Fe(III)-[cytochrome c] = farnesal + 2 Fe(II)-[cytochrome c] + 2 H(+). It carries out the reaction an aldehyde + 2 Fe(III)-[cytochrome c] + H2O = a carboxylate + 2 Fe(II)-[cytochrome c] + 3 H(+). The catalysed reaction is acetaldehyde + 2 Fe(III)-[cytochrome c] + H2O = 2 Fe(II)-[cytochrome c] + acetate + 3 H(+). It catalyses the reaction butanal + 2 Fe(III)-[cytochrome c] + H2O = butanoate + 2 Fe(II)-[cytochrome c] + 3 H(+). The enzyme catalyses hexanal + 2 Fe(III)-[cytochrome c] + H2O = hexanoate + 2 Fe(II)-[cytochrome c] + 3 H(+). It carries out the reaction octanal + 2 Fe(III)-[cytochrome c] + H2O = octanoate + 2 Fe(II)-[cytochrome c] + 3 H(+). Functionally, alcohol dehydrogenase that catalyzes the oxidation of a range of substrates, including linear and aromatic primary and secondary alcohols, as well as aldehydes, allowing bacterial growth with a variety of volatile organic compounds (VOCs) as carbon and energy sources. Uses a specific inducible cytochrome c550, encoded by the adjacent gene in the locus, as electron acceptor. The polypeptide is Quinoprotein alcohol dehydrogenase PedE (Pseudomonas putida (strain ATCC 47054 / DSM 6125 / CFBP 8728 / NCIMB 11950 / KT2440)).